A 544-amino-acid chain; its full sequence is Lysophosphatidylcholine acyltransferase 2 (544 aa).

At 1-58 (MNRCAEAAAVAATVPGSGVGDSGLRPPMVPRQASFFPPPVPNPFVQQTRISAARRLQM) the chain is on the cytoplasmic side. A helical; Signal-anchor for type II membrane protein membrane pass occupies residues 59-79 (ILLGIILLPVRALLVGLVLLL). Topologically, residues 80-544 (AWPFAVISTV…EEGTSGKKVD (465 aa)) are lumenal. The HXXXXD motif motif lies at 146-151 (HSTFFD). An EGTC motif motif is present at residues 220–223 (EGTC). EF-hand domains are found at residues 391–426 (PVSD…LCNP) and 428–463 (NTED…SLGV). Ca(2+) is bound by residues aspartate 404, asparagine 406, aspartate 408, serine 410, glutamate 415, aspartate 441, aspartate 443, aspartate 445, tyrosine 447, and glutamate 452. Residues 520-530 (TAPSVASNKVS) are compositionally biased toward polar residues. Residues 520–544 (TAPSVASNKVSPESHEEGTSGKKVD) form a disordered region. The span at 531–544 (PESHEEGTSGKKVD) shows a compositional bias: basic and acidic residues.

The protein belongs to the 1-acyl-sn-glycerol-3-phosphate acyltransferase family.

It is found in the endoplasmic reticulum membrane. The protein localises to the golgi apparatus membrane. It localises to the cell membrane. Its subcellular location is the lipid droplet. It carries out the reaction a 1-acyl-sn-glycero-3-phosphocholine + an acyl-CoA = a 1,2-diacyl-sn-glycero-3-phosphocholine + CoA. It catalyses the reaction a 1-O-alkyl-sn-glycero-3-phosphocholine + acetyl-CoA = a 1-O-alkyl-2-acetyl-sn-glycero-3-phosphocholine + CoA. The catalysed reaction is a 1-acyl-sn-glycero-3-phosphate + an acyl-CoA = a 1,2-diacyl-sn-glycero-3-phosphate + CoA. The enzyme catalyses a 1-O-(1Z-alkenyl)-sn-glycero-3-phosphocholine + an acyl-CoA = a 1-O-(1Z-alkenyl)-2-acyl-sn-glycero-3-phosphocholine + CoA. It carries out the reaction 1-hexadecanoyl-sn-glycero-3-phosphate + (9Z)-octadecenoyl-CoA = 1-hexadecanoyl-2-(9Z-octadecenoyl)-sn-glycero-3-phosphate + CoA. It catalyses the reaction 1-(9Z-octadecenoyl)-sn-glycero-3-phosphate + (9Z)-octadecenoyl-CoA = 1,2-di-(9Z-octadecenoyl)-sn-glycero-3-phosphate + CoA. The catalysed reaction is 1-(9Z-octadecenoyl)-sn-glycero-3-phosphate + hexadecanoyl-CoA = 1-(9Z)-octadecenoyl-2-hexadecanoyl-sn-glycero-3-phosphate + CoA. The enzyme catalyses 1-heptadecanoyl-sn-glycero-3-phosphate + (9Z)-octadecenoyl-CoA = 1-heptadecanoyl-2-(9Z)-octadecenoyl-sn-glycero-3-phosphate + CoA. It carries out the reaction 1-octadecanoyl-sn-glycero-3-phosphate + (9Z)-octadecenoyl-CoA = 1-octadecanoyl-2-(9Z-octadecenoyl)-sn-glycero-3-phosphate + CoA. It catalyses the reaction heptadecanoyl-CoA + 1-(9Z-octadecenoyl)-sn-glycero-3-phosphate = 1-(9Z)-octadecenoyl-2-heptadecanoyl-sn-glycero-3-phosphate + CoA. The catalysed reaction is 1-(9Z-octadecenoyl)-sn-glycero-3-phosphate + (9Z,12Z)-octadecadienoyl-CoA = 1-(9Z)-octadecenoyl-2-(9Z,12Z)-octadecadienoyl-sn-glycero-3-phosphate + CoA. The enzyme catalyses 1-(9Z-octadecenoyl)-sn-glycero-3-phosphate + tetradecanoyl-CoA = 1-(9Z)-octadecenoyl-2-tetradecanoyl-sn-glycero-3-phosphate + CoA. It carries out the reaction pentadecanoyl-CoA + 1-(9Z-octadecenoyl)-sn-glycero-3-phosphate = 1-(9Z)-octadecenoyl-2-pentadecanoyl-sn-glycero-3-phosphate + CoA. It catalyses the reaction nonadecanoyl-CoA + 1-(9Z-octadecenoyl)-sn-glycero-3-phosphate = 1-(9Z)-octadecenoyl-2-nonadecanoyl-sn-glycero-3-phosphate + CoA. The catalysed reaction is 1-hexadecanoyl-sn-glycero-3-phosphocholine + (9Z)-octadecenoyl-CoA = 1-hexadecanoyl-2-(9Z-octadecenoyl)-sn-glycero-3-phosphocholine + CoA. The enzyme catalyses 1-O-hexadecyl-sn-glycero-3-phosphocholine + acetyl-CoA = 1-O-hexadecyl-2-acetyl-sn-glycero-3-phosphocholine + CoA. It carries out the reaction 1-O-octadecyl-sn-glycero-3-phosphocholine + acetyl-CoA = 1-O-octadecyl-2-acetyl-sn-glycero-3-phosphocholine + CoA. It catalyses the reaction 1-hexadecanoyl-sn-glycero-3-phosphocholine + acetyl-CoA = 1-hexadecanoyl-2-acetyl-sn-glycero-3-phosphocholine + CoA. The catalysed reaction is 1-octadecanoyl-sn-glycero-3-phosphocholine + acetyl-CoA = 1-octadecanoyl-2-acetyl-sn-glycero-3-phosphocholine + CoA. The enzyme catalyses a 1-O-(1Z-alkenyl)-sn-glycero-3-phosphocholine + acetyl-CoA = 1-O-(1Z)-alkenyl-2-acetyl-sn-glycero-3-phosphocholine + CoA. It carries out the reaction 1-O-octadecyl-sn-glycero-3-phosphocholine + (5Z,8Z,11Z,14Z)-eicosatetraenoyl-CoA = 1-O-octadecyl-2-(5Z,8Z,11Z,14Z)-eicosatetraenoyl-sn-glycero-3-phosphocholine + CoA. Its pathway is lipid metabolism; phospholipid metabolism. Its function is as follows. Exhibits both acyltransferase and acetyltransferase activities. Activity is calcium-dependent. Catalyzes the conversion of lysophosphatidylcholine (1-acyl-sn-glycero-3-phosphocholine or LPC) into phosphatidylcholine (1,2-diacyl-sn-glycero-3-phosphocholine or PC). Catalyzes the conversion 1-acyl-sn-glycerol-3-phosphate (lysophosphatidic acid or LPA) into 1,2-diacyl-sn-glycerol-3-phosphate (phosphatidic acid or PA) by incorporating an acyl moiety at the sn-2 position of the glycerol backbone. Involved in platelet-activating factor (PAF) biosynthesis by catalyzing the conversion of the PAF precursor, 1-O-alkyl-sn-glycero-3-phosphocholine (lyso-PAF) into 1-O-alkyl-2-acetyl-sn-glycero-3-phosphocholine (PAF). Also converts lyso-PAF to 1-O-alkyl-2-acyl-sn-glycero-3-phosphocholine (PC), a major component of cell membranes and a PAF precursor. Under resting conditions, acyltransferase activity is preferred. Upon acute inflammatory stimulus, acetyltransferase activity is enhanced and PAF synthesis increases. Involved in the regulation of lipid droplet number and size. The polypeptide is Lysophosphatidylcholine acyltransferase 2 (Lpcat2) (Rattus norvegicus (Rat)).